The sequence spans 250 residues: NADH-quinone oxidoreductase subunit C (250 aa).

This sequence belongs to the complex I 30 kDa subunit family. As to quaternary structure, NDH-1 is composed of 14 different subunits. Subunits NuoB, C, D, E, F, and G constitute the peripheral sector of the complex.

It localises to the cell inner membrane. The catalysed reaction is a quinone + NADH + 5 H(+)(in) = a quinol + NAD(+) + 4 H(+)(out). Its function is as follows. NDH-1 shuttles electrons from NADH, via FMN and iron-sulfur (Fe-S) centers, to quinones in the respiratory chain. The immediate electron acceptor for the enzyme in this species is believed to be ubiquinone. Couples the redox reaction to proton translocation (for every two electrons transferred, four hydrogen ions are translocated across the cytoplasmic membrane), and thus conserves the redox energy in a proton gradient. This is NADH-quinone oxidoreductase subunit C from Xanthomonas euvesicatoria pv. vesicatoria (strain 85-10) (Xanthomonas campestris pv. vesicatoria).